A 211-amino-acid chain; its full sequence is FMN-dependent NADH:quinone oxidoreductase (211 aa).

Residues 17-19, 102-105, and 146-149 each bind FMN; these read SNS, MWNL, and SRGG.

Belongs to the azoreductase type 1 family. In terms of assembly, homodimer. FMN serves as cofactor.

The catalysed reaction is 2 a quinone + NADH + H(+) = 2 a 1,4-benzosemiquinone + NAD(+). It carries out the reaction N,N-dimethyl-1,4-phenylenediamine + anthranilate + 2 NAD(+) = 2-(4-dimethylaminophenyl)diazenylbenzoate + 2 NADH + 2 H(+). Quinone reductase that provides resistance to thiol-specific stress caused by electrophilic quinones. Its function is as follows. Also exhibits azoreductase activity. Catalyzes the reductive cleavage of the azo bond in aromatic azo compounds to the corresponding amines. The polypeptide is FMN-dependent NADH:quinone oxidoreductase (Macrococcus caseolyticus (strain JCSC5402) (Macrococcoides caseolyticum)).